The following is a 343-amino-acid chain: Glyceraldehyde-3-phosphate dehydrogenase (343 aa).

NAD(+) is bound by residues 13–14 (TI) and Gly-112. Residue 141-143 (SCN) participates in D-glyceraldehyde 3-phosphate binding. Cys-142 acts as the Nucleophile in catalysis. Arg-170 is a binding site for NAD(+). D-glyceraldehyde 3-phosphate is bound at residue 196–197 (HA). NAD(+) is bound at residue Gln-303.

It belongs to the glyceraldehyde-3-phosphate dehydrogenase family. In terms of assembly, homotetramer.

Its subcellular location is the cytoplasm. The catalysed reaction is D-glyceraldehyde 3-phosphate + phosphate + NADP(+) = (2R)-3-phospho-glyceroyl phosphate + NADPH + H(+). It carries out the reaction D-glyceraldehyde 3-phosphate + phosphate + NAD(+) = (2R)-3-phospho-glyceroyl phosphate + NADH + H(+). It functions in the pathway carbohydrate degradation; glycolysis; pyruvate from D-glyceraldehyde 3-phosphate: step 1/5. This chain is Glyceraldehyde-3-phosphate dehydrogenase (gap), found in Aeropyrum pernix (strain ATCC 700893 / DSM 11879 / JCM 9820 / NBRC 100138 / K1).